A 343-amino-acid chain; its full sequence is Protein-glutamate methylesterase/protein-glutamine glutaminase 2 (343 aa).

Positions 5–122 constitute a Response regulatory domain; the sequence is KVLVVDDSAI…SVGDMSGQLV (118 aa). Asp56 carries the post-translational modification 4-aspartylphosphate. The region spanning 154–343 is the CheB-type methylesterase domain; that stretch reads AETSNKVIAI…SIADEIVRMV (190 aa). Catalysis depends on residues Ser166, His192, and Asp288.

This sequence belongs to the CheB family. Post-translationally, phosphorylated by CheA. Phosphorylation of the N-terminal regulatory domain activates the methylesterase activity.

It is found in the cytoplasm. It carries out the reaction [protein]-L-glutamate 5-O-methyl ester + H2O = L-glutamyl-[protein] + methanol + H(+). It catalyses the reaction L-glutaminyl-[protein] + H2O = L-glutamyl-[protein] + NH4(+). Involved in chemotaxis. Part of a chemotaxis signal transduction system that modulates chemotaxis in response to various stimuli. Catalyzes the demethylation of specific methylglutamate residues introduced into the chemoreceptors (methyl-accepting chemotaxis proteins or MCP) by CheR. Also mediates the irreversible deamidation of specific glutamine residues to glutamic acid. This Syntrophus aciditrophicus (strain SB) protein is Protein-glutamate methylesterase/protein-glutamine glutaminase 2.